A 990-amino-acid chain; its full sequence is Activator of stress genes protein 1 (990 aa).

The interval 1-88 is disordered; the sequence is MPKREIEDTQ…NKPKSQENKR (88 aa). Over residues 9–23 the composition is skewed to polar residues; the sequence is TQSPYSSTGLVSTGE. Residues 24–61 are compositionally biased toward low complexity; it reads SPKTSTSTPTSSTNNRAATTTTNNTSTTSTSLLKSNSN. Positions 95–121 form a DNA-binding region, zn(2)-C6 fungal-type; it reads CDTCRQKKVKCDGKQPCIHCTVYSYKC. Composition is skewed to low complexity over residues 160–179, 282–293, and 773–793; these read NNNSSNQQSLQSLQQQQQHV, SFDDSSNSAVSS, and TATTNSTTTTANTNSNSNSNS. Disordered regions lie at residues 160–192, 255–295, 764–800, and 915–944; these read NNNSSNQQSLQSLQQQQQHVVHQHQHQPLPADE, QDPD…SSPR, RTASRSRQVTATTNSTTTTANTNSNSNSNSQPTTLPA, and SNNNNSNNVNNNFNNNNNAGEVNNNSNGVA.

The protein belongs to the ASG1 family.

Its subcellular location is the nucleus. Its function is as follows. Transcription factor necessary to sustain growth on non-fermentative carbon sources such as sodium acetate, acetic acid, or ethanol. Plays a role in hyphal formation. The protein is Activator of stress genes protein 1 (ASG1) of Candida albicans (strain SC5314 / ATCC MYA-2876) (Yeast).